The sequence spans 493 residues: Glutamyl-tRNA(Gln) amidotransferase subunit A (493 aa).

Residues lysine 79 and serine 159 each act as charge relay system in the active site. The active-site Acyl-ester intermediate is serine 183.

Belongs to the amidase family. GatA subfamily. Heterotrimer of A, B and C subunits.

It catalyses the reaction L-glutamyl-tRNA(Gln) + L-glutamine + ATP + H2O = L-glutaminyl-tRNA(Gln) + L-glutamate + ADP + phosphate + H(+). Allows the formation of correctly charged Gln-tRNA(Gln) through the transamidation of misacylated Glu-tRNA(Gln) in organisms which lack glutaminyl-tRNA synthetase. The reaction takes place in the presence of glutamine and ATP through an activated gamma-phospho-Glu-tRNA(Gln). The sequence is that of Glutamyl-tRNA(Gln) amidotransferase subunit A from Brucella suis biovar 1 (strain 1330).